Here is a 354-residue protein sequence, read N- to C-terminus: 3-isopropylmalate dehydrogenase (354 aa).

74–87 (GPKWDDLPPEKRPE) contributes to the NAD(+) binding site. R95, R105, R134, and D219 together coordinate substrate. Mg(2+)-binding residues include D219, D243, and D247. Residue 275–287 (GSAPDIAGKNIAN) coordinates NAD(+).

The protein belongs to the isocitrate and isopropylmalate dehydrogenases family. LeuB type 1 subfamily. Homodimer. Mg(2+) serves as cofactor. The cofactor is Mn(2+).

It localises to the cytoplasm. It catalyses the reaction (2R,3S)-3-isopropylmalate + NAD(+) = 4-methyl-2-oxopentanoate + CO2 + NADH. It functions in the pathway amino-acid biosynthesis; L-leucine biosynthesis; L-leucine from 3-methyl-2-oxobutanoate: step 3/4. Catalyzes the oxidation of 3-carboxy-2-hydroxy-4-methylpentanoate (3-isopropylmalate) to 3-carboxy-4-methyl-2-oxopentanoate. The product decarboxylates to 4-methyl-2 oxopentanoate. This is 3-isopropylmalate dehydrogenase (leuB) from Thermotoga maritima (strain ATCC 43589 / DSM 3109 / JCM 10099 / NBRC 100826 / MSB8).